The primary structure comprises 2522 residues: MSVHDVGGRRRFEDSELTLRIYPGIIAEGTIYCPVAARKITSAAEVIEQVIDRLQLDRTKCYVLAEVKEFGGEEWILNPTDYPVQRMMLWPRMALENRFSSEDYRFLLREKNLDGSIHYGNLQMWLQVTEERRRMVERGFLPQPLPKDFDDLCNLPDLNEKTLLDNLRSRFKQEKIYTYVGSILIVINPFKFLPIYNPKYVKMYDNHQLGKLEPHIYAVADVAYHAMLQSRQNQCIVISGESGSGKTQSTNFLIHHLTALSQKGFASGVEQIILGAGPVLEAFGNAKTAHNNNSSRFGKFIQVNYQESGTVRGAYVEKYLLEKSRLVYQEHNERNYHVFYYLLAGTSEEERTAFHLKKPEEYHYLNQMTKKPHRPHWGNYYENEPDCFTVEGEDLKHDFERLQLAMEMVGFLPTTRKQIFSLLSAILHLGNIRYKKKIYRDDSIDICNPEVLPVVSELLEVKEEMLFEALTTRKTVTVGEKLIVPYKLAEAGTVRDSMAKSLYSALFDWIVFRINHALLNQRDLEESAKILSIGVLDIFGFEDYENNSFEQFCINFANERLQHYFNQHIFKLEQEEYRAEGITWHNIDYIDNTSCITLISKKPTALLHLLDEECNFPQATNQTLLDKFKRQHEGNSYIEFPAVMEPAFIIKHYAGKVKYGVKDFREKNTDHMRPDIVALLKSSKNAFICGLIGIDPVATFRWAVLRAYFRAMVAFRDAGKRHVEKRSGHDAAAPAVKSVDSFSFLHHPVHQRSLEILQRCKEEKYSVNRRNPRTPLSDLQGSNAINQREGWNGRPGRQNRLSSFGSFSEEEGIFINSTSSKLLERAHGILMRNKNYKMKPSLPKHLLDVKSLKYLSNLTLQDRITKSLLHLHKKKKPPSISAQFQASLNKLMETLGQSQPYFVKCIRSNSEKLPLRFNDSLVLRQLRYTGMLETVRIRQSGYSIKYTFQDFARHFHVLLPEGSNQASQEAIRQYLQQVDLTPEGFQVGRTMVFLREIERQRLQDLLHKEVLSRIVYLQRRFRALLERKNFLRVRQAACQIQNWWRSCQSLQRDSQLEYDMRVQEGAVVCIQSAWRGFRERRRLLLWREASVLIQRTWRLYRQRRAALQIQTAWRRHRARELFLRQRDATIRLQAVGRGYLARQRFRELQKQRLKITHLPNGKASLLTEEDKLEDMGLDASMLEDSFEEQDRSKQALSSAVEASGAGVLEEMEVEMMEGMAPAQPSPEVTIRERPRTLEDPNQRTRAKRESRRMRELEQAKFSLELLKVRSTGGTSPSDERRWSMELVSEIAHTPQGTPDSQSSKGSFELLNIDDYFKDKAPCAEPEDLGSPSSVPDQHNVLPSDTSTPDILSKPDDQSKPPRMQYSLPTFYTPPSESSSLVIKSTTNSVTPCPDGLSKPSKDKKESTRRPMVVVISMQKETLLNEADVKPLEVKDSAAQTSEPPSPAQPSTDSSYVLEKLEKLNEEKEERQKHQRQQNEKEMMEQIRQQTHILEEQRRNLVQNEREKLEKQRAETLRRIEQSRQESSGGRTDRPAPIAQPEPDLTSQRPAREKDGAPLILRDRPKDAQNLAEGWAPKLTLESRGDEARSRINKKPSNQNVNISMSERPGNIFFSPKTKIAYSKLNKDLANQEKTPGAQNEVSLLGYKSTKTEVGRPGHKKARMARTRSDFLTRSSSTQGEGESEEEEYDETPLYAGTPLPKQDSEESAVEACHSDSEMLTTAAEEQKNRCKTLPSGELGKHDTRKNSHGDGRVRGKMRFWGKAKNAEKKSSRERLLCGSDTLEGDYTEATLLMEEGVERLSPPHSPDLTLQREFKENKEPSPKVKRRRSVKISSVALEPVQWQNDALQILTCTSDYKSMNDFLMKKITDLDTEDGKKDTMVDVVFKKALKEFRVNIFNSYSTALAMDDGKSIRYKDLYALFEQILEKNMRQEQRDWSESPVKVWVNTFKVFLDEFMTEHKPLDSSLGKAPKPDRKKRRKKDTDVVEEHNGHIFKSTQYSIPTYCEYCSSLIWMMDKACVCKLCRYACHRKCCQKMTTKCSKKYDPELSSRQFGVELSRLTNDERTVPLVVEKLVNYIEMHGLYTEGIYRKSGSTNKIKELKQGLDTDVNGVNLDDYNINVIASVFKQWLRDLPNPLMTFELYEEFLRAMGLQDKKEVIRGVYSVIDQLSRTHLNTLERLIFHLVRIALQEETNRMSANALAIVFAPCILRCPDTIDPLRSVQDIGKTTACVELIICEQMNKYRARLKDINTLEFAENKAKSRLTFIRRSMGKGPVHRLRYRTPSPPTSPRSPTAPEVMQDSGEEEPGRDPEVSEQQQVAMQQEEKVLTEQIESLQKEKEELTFEMLALEPRASDDETLESEASIGTADSSENLNVDSEGATSDYSERGPALAATRPKKSEGKSRRVLRKQPESLDSIDSCSTVSSVSSSYMQPTSRTHKLSLRSKSPSKRLYLSSPSESLDQPEQDGEERPQFTSRGTFNPEKGKQRLQGAKSSPQRHREQKKDPELSPQQVVVYGSNEFMV.

Residues 15–113 (SELTLRIYPG…YRFLLREKNL (99 aa)) enclose the Ras-associating domain. In terms of domain architecture, Myosin motor spans 147–1007 (KDFDDLCNLP…ERQRLQDLLH (861 aa)). A helical transmembrane segment spans residues 176-196 (IYTYVGSILIVINPFKFLPIY). 240-247 (GESGSGKT) contacts ATP. Residues 767-802 (VNRRNPRTPLSDLQGSNAINQREGWNGRPGRQNRLS) are disordered. A compositionally biased stretch (polar residues) spans 777-786 (SDLQGSNAIN). Residues 888-910 (LNKLMETLGQSQPYFVKCIRSNS) form an actin-binding region. IQ domains are found at residues 1012-1039 (SRIV…AACQ), 1063-1092 (QEGA…ASVL), 1102-1131 (QRRA…ATIR), and 1125-1154 (QRDA…QRLK). Positions 1012-1149 (SRIVYLQRRF…LARQRFRELQ (138 aa)) are neck or regulatory domain. The segment at 1150-2497 (KQRLKITHLP…LQGAKSSPQR (1348 aa)) is tail. Disordered stretches follow at residues 1218-1254 (GMAP…RRMR), 1318-1409 (DKAP…STRR), 1424-1612 (NEAD…GNIF), 1630-1754 (NQEK…GRVR), 1799-1827 (RLSP…VKRR), and 1962-1983 (LDSS…KDTD). Over residues 1229-1242 (TIRERPRTLEDPNQ) the composition is skewed to basic and acidic residues. 2 stretches are compositionally biased toward polar residues: residues 1330 to 1349 (SPSS…STPD) and 1366 to 1390 (SLPT…NSVT). 2 stretches are compositionally biased toward basic and acidic residues: residues 1399–1408 (PSKDKKESTR) and 1426–1435 (ADVKPLEVKD). Positions 1437–1454 (AAQTSEPPSPAQPSTDSS) are enriched in polar residues. A coiled-coil region spans residues 1456-1525 (VLEKLEKLNE…LRRIEQSRQE (70 aa)). Composition is skewed to basic and acidic residues over residues 1458 to 1484 (EKLE…EMME), 1492 to 1523 (ILEE…EQSR), 1549 to 1566 (PARE…RPKD), and 1580 to 1589 (LESRGDEARS). Composition is skewed to polar residues over residues 1594-1604 (KPSNQNVNISM) and 1631-1641 (QEKTPGAQNEV). Positions 1656–1665 (PGHKKARMAR) are enriched in basic residues. Residues 1681–1690 (GESEEEEYDE) show a composition bias toward acidic residues. 2 stretches are compositionally biased toward basic and acidic residues: residues 1738–1753 (LGKH…DGRV) and 1810–1822 (LQRE…EPSP). Residues 1990–2039 (GHIFKSTQYSIPTYCEYCSSLIWMMDKACVCKLCRYACHRKCCQKMTTKC) form a Phorbol-ester/DAG-type zinc finger. The Rho-GAP domain occupies 2054 to 2242 (VELSRLTNDE…LIICEQMNKY (189 aa)). Disordered regions lie at residues 2274-2325 (PVHR…QEEK) and 2348-2522 (LEPR…EFMV). Residues 2317–2344 (QVAMQQEEKVLTEQIESLQKEKEELTFE) are a coiled coil. A compositionally biased stretch (polar residues) spans 2366–2383 (TADSSENLNVDSEGATSD). Residues 2413–2429 (SLDSIDSCSTVSSVSSS) show a composition bias toward low complexity. The span at 2436-2448 (RTHKLSLRSKSPS) shows a compositional bias: basic residues. The segment covering 2497–2506 (RHREQKKDPE) has biased composition (basic and acidic residues).

It belongs to the TRAFAC class myosin-kinesin ATPase superfamily. Myosin family.

The protein resides in the membrane. Its subcellular location is the cytoplasm. It localises to the synapse. It is found in the cell projection. The protein localises to the growth cone. Myosins are actin-based motor molecules with ATPase activity. Unconventional myosins serve in intracellular movements. Regulates Rho by stimulating it's GTPase activity in neurons. Required for the regulation of neurite branching and motor neuron axon guidance. In Danio rerio (Zebrafish), this protein is Unconventional myosin-IXAa (myo9aa).